The following is a 146-amino-acid chain: Transcription antitermination protein NusB (146 aa).

This sequence belongs to the NusB family.

Involved in transcription antitermination. Required for transcription of ribosomal RNA (rRNA) genes. Binds specifically to the boxA antiterminator sequence of the ribosomal RNA (rrn) operons. The sequence is that of Transcription antitermination protein NusB from Herpetosiphon aurantiacus (strain ATCC 23779 / DSM 785 / 114-95).